The chain runs to 1254 residues: Zinc finger protein BRUTUS (1254 aa).

The disordered stretch occupies residues M1–P40. Positions S19–P40 are enriched in low complexity. The helical transmembrane segment at F201–I221 threads the bilayer. Residues G893–H913 form a disordered region. Positions P895–S906 are enriched in polar residues. A CHY-type zinc finger spans residues P999–G1068. Residues C1006, H1008, C1019, C1020, C1026, C1029, H1030, H1036, C1048, C1051, C1061, C1066, C1076, C1079, H1090, C1091, C1094, C1097, H1109, C1110, C1113, C1116, H1124, and C1126 each contribute to the Zn(2+) site. Residues M1071–N1134 form a CTCHY-type zinc finger. An RING-type; atypical zinc finger spans residues C1135–C1176.

In terms of assembly, interacts with the PYEL proteins bHLH115, bHLH104 and ILR3 in the nucleus. Binds zinc and iron ions. In terms of tissue distribution, expressed in cotyledons of seedlings, young leaves, developing and mature embryos, and other reproductive tissues including floral vasculature, funiculus, septum, and gynoecium valves.

It is found in the membrane. Its subcellular location is the nucleus. Its pathway is protein modification; protein ubiquitination. Functionally, essential protein. Negatively regulates the response to iron deficiency and thus contributes to iron homeostasis. Exhibits E3 ubiquitin-protein ligase activity in vitro. Plays a role in root growth, rhizosphere acidification, and iron reductase activity in response to iron deprivation. Facilitates 26S proteasome-mediated degradation of PYEL proteins in the absence of iron. The sequence is that of Zinc finger protein BRUTUS from Arabidopsis thaliana (Mouse-ear cress).